Here is a 336-residue protein sequence, read N- to C-terminus: Anthranilate phosphoribosyltransferase (336 aa).

Residues Gly78, 81-82 (GD), Thr86, 88-91 (NVST), 106-114 (KHGNYSVSS), and Ser118 each bind 5-phospho-alpha-D-ribose 1-diphosphate. Gly78 is a binding site for anthranilate. Ser90 is a Mg(2+) binding site. Asn109 provides a ligand contact to anthranilate. Arg164 contributes to the anthranilate binding site. 2 residues coordinate Mg(2+): Asp222 and Glu223.

This sequence belongs to the anthranilate phosphoribosyltransferase family. As to quaternary structure, homodimer. Mg(2+) is required as a cofactor.

It catalyses the reaction N-(5-phospho-beta-D-ribosyl)anthranilate + diphosphate = 5-phospho-alpha-D-ribose 1-diphosphate + anthranilate. It functions in the pathway amino-acid biosynthesis; L-tryptophan biosynthesis; L-tryptophan from chorismate: step 2/5. Functionally, catalyzes the transfer of the phosphoribosyl group of 5-phosphorylribose-1-pyrophosphate (PRPP) to anthranilate to yield N-(5'-phosphoribosyl)-anthranilate (PRA). The polypeptide is Anthranilate phosphoribosyltransferase (Halobacterium salinarum (strain ATCC 29341 / DSM 671 / R1)).